The chain runs to 290 residues: Pyridoxal kinase PdxY (290 aa).

Residues Ser12 and 47–48 (TQ) each bind substrate. Residues Asp114, Glu151, Lys184, and 211-214 (RPLL) contribute to the ATP site. Residue Asp225 participates in substrate binding.

Belongs to the pyridoxine kinase family. PdxY subfamily. In terms of assembly, homodimer. It depends on Mg(2+) as a cofactor.

The catalysed reaction is pyridoxal + ATP = pyridoxal 5'-phosphate + ADP + H(+). It functions in the pathway cofactor metabolism; pyridoxal 5'-phosphate salvage; pyridoxal 5'-phosphate from pyridoxal: step 1/1. Pyridoxal kinase involved in the salvage pathway of pyridoxal 5'-phosphate (PLP). Catalyzes the phosphorylation of pyridoxal to PLP. The chain is Pyridoxal kinase PdxY from Pseudomonas putida (strain ATCC 47054 / DSM 6125 / CFBP 8728 / NCIMB 11950 / KT2440).